The primary structure comprises 159 residues: MAEQVVEILVSGGKATAGPPLGPAIGPLGVNIMQVVQKINNMTKDYEGMSVPVKVIVDTDKRTFEVEVGIPPASALIKKEIGIEKGSQEPKHQVAGNITMEQIVKIAKMKQDAMLAYNLKNASKEVVGTCVSVGISVEGMTPSEAQKAIDAGQFDSYFN.

This sequence belongs to the universal ribosomal protein uL11 family. As to quaternary structure, part of the ribosomal stalk of the 50S ribosomal subunit. Interacts with L10 and the large rRNA to form the base of the stalk. L10 forms an elongated spine to which L12 dimers bind in a sequential fashion forming a multimeric L10(L12)X complex.

In terms of biological role, forms part of the ribosomal stalk which helps the ribosome interact with GTP-bound translation factors. The polypeptide is Large ribosomal subunit protein uL11 (Methanococcus maripaludis (strain DSM 14266 / JCM 13030 / NBRC 101832 / S2 / LL)).